Reading from the N-terminus, the 457-residue chain is Endo-1,3(4)-beta-glucanase ARB_04519 (457 aa).

Positions 1 to 18 (MRTTGLLLLGALAELGSA) are cleaved as a signal peptide. Residues 19–319 (TYILEDDYQP…YMKVYQQGTA (301 aa)) enclose the GH16 domain. Catalysis depends on E130, which acts as the Nucleophile. The active-site Proton donor is E135. N200 carries N-linked (GlcNAc...) asparagine glycosylation. The segment at 318–397 (TAPTKPSQAP…DSCPPPTQPA (80 aa)) is disordered. Residues 333 to 352 (TPALPTMKSTSTVSSMVSAT) show a composition bias toward low complexity. Residues 353–362 (QPAPTASNPT) show a composition bias toward polar residues. The segment covering 368–378 (PSSSSSNNGPQ) has biased composition (low complexity).

It belongs to the glycosyl hydrolase 16 family.

It localises to the secreted. It catalyses the reaction Endohydrolysis of (1-&gt;3)- or (1-&gt;4)-linkages in beta-D-glucans when the glucose residue whose reducing group is involved in the linkage to be hydrolyzed is itself substituted at C-3.. Its function is as follows. Mixed-linked glucanase involved in the degradation of complex natural cellulosic substrates. Active on laminarin. lichenan, soluble carboxymethyl cellulose but not on pustulan. In Arthroderma benhamiae (strain ATCC MYA-4681 / CBS 112371) (Trichophyton mentagrophytes), this protein is Endo-1,3(4)-beta-glucanase ARB_04519.